Reading from the N-terminus, the 327-residue chain is Cobalamin biosynthesis protein CobD (327 aa).

Transmembrane regions (helical) follow at residues 61 to 78, 80 to 102, 160 to 182, and 300 to 322; these read MWLT…GLVI, SILP…ILLA, GIVA…YKFI, and AALV…ASLV.

It belongs to the CobD/CbiB family.

The protein localises to the cell membrane. The protein operates within cofactor biosynthesis; adenosylcobalamin biosynthesis. Functionally, converts cobyric acid to cobinamide by the addition of aminopropanol on the F carboxylic group. This Brucella melitensis biotype 1 (strain ATCC 23456 / CCUG 17765 / NCTC 10094 / 16M) protein is Cobalamin biosynthesis protein CobD.